Consider the following 603-residue polypeptide: Elongation factor 4 (603 aa).

A tr-type G domain is found at 9-191 (SNIRNFSIIA…RIVRQIPPPK (183 aa)). GTP-binding positions include 21–26 (DHGKST) and 138–141 (NKID).

This sequence belongs to the TRAFAC class translation factor GTPase superfamily. Classic translation factor GTPase family. LepA subfamily.

The protein localises to the cell inner membrane. It catalyses the reaction GTP + H2O = GDP + phosphate + H(+). Its function is as follows. Required for accurate and efficient protein synthesis under certain stress conditions. May act as a fidelity factor of the translation reaction, by catalyzing a one-codon backward translocation of tRNAs on improperly translocated ribosomes. Back-translocation proceeds from a post-translocation (POST) complex to a pre-translocation (PRE) complex, thus giving elongation factor G a second chance to translocate the tRNAs correctly. Binds to ribosomes in a GTP-dependent manner. The sequence is that of Elongation factor 4 from Idiomarina loihiensis (strain ATCC BAA-735 / DSM 15497 / L2-TR).